We begin with the raw amino-acid sequence, 460 residues long: tRNA modification GTPase MnmE (460 aa).

The (6S)-5-formyl-5,6,7,8-tetrahydrofolate site is built by R24, E81, and K121. The 168-residue stretch at 218–385 (GMVVAIAGPP…LIAAIEDFAA (168 aa)) folds into the TrmE-type G domain. GTP-binding positions include 228–233 (NVGKST), 247–253 (SPHAGTT), and 272–275 (DTAG). Mg(2+)-binding residues include S232 and T253. K460 serves as a coordination point for (6S)-5-formyl-5,6,7,8-tetrahydrofolate.

The protein belongs to the TRAFAC class TrmE-Era-EngA-EngB-Septin-like GTPase superfamily. TrmE GTPase family. In terms of assembly, homodimer. Heterotetramer of two MnmE and two MnmG subunits. K(+) serves as cofactor.

It localises to the cytoplasm. Exhibits a very high intrinsic GTPase hydrolysis rate. Involved in the addition of a carboxymethylaminomethyl (cmnm) group at the wobble position (U34) of certain tRNAs, forming tRNA-cmnm(5)s(2)U34. The polypeptide is tRNA modification GTPase MnmE (Rhodopseudomonas palustris (strain BisB5)).